The following is a 2111-amino-acid chain: Glutamate synthase [NADH] (2111 aa).

The Nucleophile role is filled by Cys69. Residues Cys69–Lys469 enclose the Glutamine amidotransferase type-2 domain. The tract at residues Gly969–Gly990 is disordered. Val1139–Gly1191 is a binding site for FMN. The [3Fe-4S] cluster site is built by Cys1192, Cys1198, and Cys1203.

It belongs to the glutamate synthase family. In terms of assembly, homotrimer. It depends on [3Fe-4S] cluster as a cofactor. Requires FAD as cofactor. FMN is required as a cofactor.

The protein localises to the cytoplasm. The catalysed reaction is 2 L-glutamate + NAD(+) = L-glutamine + 2-oxoglutarate + NADH + H(+). It functions in the pathway amino-acid biosynthesis; L-glutamate biosynthesis via GLT pathway; L-glutamate from 2-oxoglutarate and L-glutamine (NAD(+) route): step 1/1. It participates in energy metabolism; nitrogen metabolism. In the presence of 10 mM allantoin, the activity is reduced more than 25%. Forms L-glutamate from L-glutamine and 2-oxoglutarate. Represents an alternative pathway to L-glutamate dehydrogenase for the biosynthesis of L-glutamate. Participates with glutamine synthetase in ammonia assimilation processes. The enzyme is specific for NADH, L-glutamine and 2-oxoglutarate. This Schizosaccharomyces pombe (strain 972 / ATCC 24843) (Fission yeast) protein is Glutamate synthase [NADH] (glt1).